A 150-amino-acid polypeptide reads, in one-letter code: SsrA-binding protein (150 aa).

Belongs to the SmpB family.

It localises to the cytoplasm. Functionally, required for rescue of stalled ribosomes mediated by trans-translation. Binds to transfer-messenger RNA (tmRNA), required for stable association of tmRNA with ribosomes. tmRNA and SmpB together mimic tRNA shape, replacing the anticodon stem-loop with SmpB. tmRNA is encoded by the ssrA gene; the 2 termini fold to resemble tRNA(Ala) and it encodes a 'tag peptide', a short internal open reading frame. During trans-translation Ala-aminoacylated tmRNA acts like a tRNA, entering the A-site of stalled ribosomes, displacing the stalled mRNA. The ribosome then switches to translate the ORF on the tmRNA; the nascent peptide is terminated with the 'tag peptide' encoded by the tmRNA and targeted for degradation. The ribosome is freed to recommence translation, which seems to be the essential function of trans-translation. The polypeptide is SsrA-binding protein (Campylobacter jejuni subsp. jejuni serotype O:6 (strain 81116 / NCTC 11828)).